The sequence spans 252 residues: 5'-nucleotidase SurE (252 aa).

Residues Asp8, Asp9, Ser39, and Asn95 each coordinate a divalent metal cation.

This sequence belongs to the SurE nucleotidase family. Requires a divalent metal cation as cofactor.

It is found in the cytoplasm. It catalyses the reaction a ribonucleoside 5'-phosphate + H2O = a ribonucleoside + phosphate. Its function is as follows. Nucleotidase that shows phosphatase activity on nucleoside 5'-monophosphates. In Clostridium botulinum (strain Okra / Type B1), this protein is 5'-nucleotidase SurE.